The primary structure comprises 115 residues: Evasin P1182 (115 aa).

Positions 1 to 26 (MALNWSFRVIFVSTMWCALLKFATLG) are cleaved as a signal peptide. 4 disulfide bridges follow: Cys38/Cys58, Cys54/Cys94, Cys70/Cys99, and Cys89/Cys108. N-linked (GlcNAc...) asparagine glycans are attached at residues Asn45, Asn72, and Asn103.

The protein localises to the secreted. Salivary chemokine-binding protein which binds to host chemokines CCL2, CCL3, CCL4, CCL8 and CCL18. The protein is Evasin P1182 of Amblyomma maculatum (Gulf Coast tick).